The following is a 627-amino-acid chain: Monoterpene synthase like 1, chloroplastic (627 aa).

Residues 1–50 constitute a chloroplast transit peptide; it reads MDLISVLPSTSKSCVCMHKPLSSSTHKLKPFCRTIRILGMPRPRKSVLMA. Mg(2+) contacts are provided by Asp378, Asp382, and Asp530. The DDXXD motif signature appears at 378–382; it reads DDMYD.

It belongs to the terpene synthase family. Tpsd subfamily. It depends on Mg(2+) as a cofactor. Mn(2+) is required as a cofactor.

It is found in the plastid. Its subcellular location is the chloroplast. Its pathway is terpene metabolism; oleoresin biosynthesis. The protein operates within secondary metabolite biosynthesis; terpenoid biosynthesis. Functionally, monoterpene synthase (TPS) involved in the biosynthesis of monoterpene natural products included in conifer oleoresin secretions and volatile emissions; these compounds contribute to biotic and abiotic stress defense against herbivores and pathogens. The polypeptide is Monoterpene synthase like 1, chloroplastic (Pinus contorta (Shore pine)).